Reading from the N-terminus, the 354-residue chain is 3-isopropylmalate dehydrogenase (354 aa).

76–87 (GPRWDGAKERPE) contacts NAD(+). 4 residues coordinate substrate: Arg-94, Arg-104, Arg-130, and Asp-215. Mg(2+)-binding residues include Asp-215, Asp-239, and Asp-243. 273–285 (GSAPDIAGKNKAN) provides a ligand contact to NAD(+).

It belongs to the isocitrate and isopropylmalate dehydrogenases family. LeuB type 1 subfamily. Homodimer. Requires Mg(2+) as cofactor. Mn(2+) is required as a cofactor.

It localises to the cytoplasm. The catalysed reaction is (2R,3S)-3-isopropylmalate + NAD(+) = 4-methyl-2-oxopentanoate + CO2 + NADH. It participates in amino-acid biosynthesis; L-leucine biosynthesis; L-leucine from 3-methyl-2-oxobutanoate: step 3/4. In terms of biological role, catalyzes the oxidation of 3-carboxy-2-hydroxy-4-methylpentanoate (3-isopropylmalate) to 3-carboxy-4-methyl-2-oxopentanoate. The product decarboxylates to 4-methyl-2 oxopentanoate. The polypeptide is 3-isopropylmalate dehydrogenase (Bacillus anthracis).